Consider the following 491-residue polypeptide: 3-octaprenyl-4-hydroxybenzoate carboxy-lyase (491 aa).

N172 contacts Mn(2+). Prenylated FMN is bound by residues 175–177 (IYR), 189–191 (RWL), and 194–195 (RG). Position 238 (E238) interacts with Mn(2+). Catalysis depends on D287, which acts as the Proton donor.

It belongs to the UbiD family. In terms of assembly, homohexamer. Prenylated FMN serves as cofactor. Requires Mn(2+) as cofactor.

It localises to the cell membrane. It catalyses the reaction a 4-hydroxy-3-(all-trans-polyprenyl)benzoate + H(+) = a 2-(all-trans-polyprenyl)phenol + CO2. It functions in the pathway cofactor biosynthesis; ubiquinone biosynthesis. Catalyzes the decarboxylation of 3-octaprenyl-4-hydroxy benzoate to 2-octaprenylphenol, an intermediate step in ubiquinone biosynthesis. The sequence is that of 3-octaprenyl-4-hydroxybenzoate carboxy-lyase from Histophilus somni (strain 129Pt) (Haemophilus somnus).